The sequence spans 504 residues: Anaerobic nitric oxide reductase transcription regulator NorR (504 aa).

The residue at position 57 (aspartate 57) is a 4-aspartylphosphate. In terms of domain architecture, Sigma-54 factor interaction spans 187–416; the sequence is MIGLSPGMTQ…LEHAIHRAVV (230 aa). ATP contacts are provided by residues 215-222 and 278-287; these read GETGTGKE and ADNGTLFLDE. The segment at residues 479-498 is a DNA-binding region (H-T-H motif); sequence WAACARMLETDVANLHRLAK.

The protein operates within nitrogen metabolism; nitric oxide reduction. Its function is as follows. Required for the expression of anaerobic nitric oxide (NO) reductase, acts as a transcriptional activator for at least the norVW operon. Activation also requires sigma-54. This is Anaerobic nitric oxide reductase transcription regulator NorR from Escherichia coli O8 (strain IAI1).